We begin with the raw amino-acid sequence, 310 residues long: MRILFMGTPEFAASYLDFLIQKKFNVVAVISQKDKPRGRGQKLLPTPVKEVAQKYGIPVFQPSKLNEEGLEIIENYRPDIGIVVAYGRLLRKPFLDAIPLYNVHTSLLPKYRGPAPMQRAIENGERVTGVTIFKISEGMDEGDIALQRAFELEECEPFGSVYEKFIKYGTELLQEFLRNYPVTLTPQDHSKATYAPKIEKKDLYVDFSKPAVEVRNKIRAYDPTPGVRTFLNDIEVKLYGACEIESNSQENIEPGTVVRIEKQSGDGVIKTIDGLLHIKYIQFPGKNKITFLSAKNGGLIKEGMVFRNLD.

106 to 109 (SLLP) contributes to the (6S)-5,6,7,8-tetrahydrofolate binding site.

It belongs to the Fmt family.

It catalyses the reaction L-methionyl-tRNA(fMet) + (6R)-10-formyltetrahydrofolate = N-formyl-L-methionyl-tRNA(fMet) + (6S)-5,6,7,8-tetrahydrofolate + H(+). Attaches a formyl group to the free amino group of methionyl-tRNA(fMet). The formyl group appears to play a dual role in the initiator identity of N-formylmethionyl-tRNA by promoting its recognition by IF2 and preventing the misappropriation of this tRNA by the elongation apparatus. This Fervidobacterium nodosum (strain ATCC 35602 / DSM 5306 / Rt17-B1) protein is Methionyl-tRNA formyltransferase.